We begin with the raw amino-acid sequence, 204 residues long: Thymidylate kinase (204 aa).

11-18 (GLDKSGKT) is an ATP binding site.

Belongs to the thymidylate kinase family.

It catalyses the reaction dTMP + ATP = dTDP + ADP. It functions in the pathway pyrimidine metabolism; dTTP biosynthesis. The polypeptide is Thymidylate kinase (TMK) (Cowpox virus (strain GRI-90 / Grishak) (CPV)).